Consider the following 210-residue polypeptide: Imidazole glycerol phosphate synthase subunit HisH (210 aa).

Positions 7–210 (KVVIIDTGCA…SQLIKNFLEM (204 aa)) constitute a Glutamine amidotransferase type-1 domain. The active-site Nucleophile is Cys-82. Active-site residues include His-192 and Glu-194.

As to quaternary structure, heterodimer of HisH and HisF.

The protein resides in the cytoplasm. The catalysed reaction is 5-[(5-phospho-1-deoxy-D-ribulos-1-ylimino)methylamino]-1-(5-phospho-beta-D-ribosyl)imidazole-4-carboxamide + L-glutamine = D-erythro-1-(imidazol-4-yl)glycerol 3-phosphate + 5-amino-1-(5-phospho-beta-D-ribosyl)imidazole-4-carboxamide + L-glutamate + H(+). It catalyses the reaction L-glutamine + H2O = L-glutamate + NH4(+). It functions in the pathway amino-acid biosynthesis; L-histidine biosynthesis; L-histidine from 5-phospho-alpha-D-ribose 1-diphosphate: step 5/9. IGPS catalyzes the conversion of PRFAR and glutamine to IGP, AICAR and glutamate. The HisH subunit catalyzes the hydrolysis of glutamine to glutamate and ammonia as part of the synthesis of IGP and AICAR. The resulting ammonia molecule is channeled to the active site of HisF. This chain is Imidazole glycerol phosphate synthase subunit HisH, found in Photobacterium profundum (strain SS9).